Here is a 189-residue protein sequence, read N- to C-terminus: ATP synthase subunit b (189 aa).

Residues 38–58 (PMFLATLIAFILVVLILWFLL) traverse the membrane as a helical segment.

The protein belongs to the ATPase B chain family. F-type ATPases have 2 components, F(1) - the catalytic core - and F(0) - the membrane proton channel. F(1) has five subunits: alpha(3), beta(3), gamma(1), delta(1), epsilon(1). F(0) has three main subunits: a(1), b(2) and c(10-14). The alpha and beta chains form an alternating ring which encloses part of the gamma chain. F(1) is attached to F(0) by a central stalk formed by the gamma and epsilon chains, while a peripheral stalk is formed by the delta and b chains.

It localises to the cell membrane. F(1)F(0) ATP synthase produces ATP from ADP in the presence of a proton or sodium gradient. F-type ATPases consist of two structural domains, F(1) containing the extramembraneous catalytic core and F(0) containing the membrane proton channel, linked together by a central stalk and a peripheral stalk. During catalysis, ATP synthesis in the catalytic domain of F(1) is coupled via a rotary mechanism of the central stalk subunits to proton translocation. In terms of biological role, component of the F(0) channel, it forms part of the peripheral stalk, linking F(1) to F(0). The sequence is that of ATP synthase subunit b from Mycoplasmopsis agalactiae (strain NCTC 10123 / CIP 59.7 / PG2) (Mycoplasma agalactiae).